We begin with the raw amino-acid sequence, 226 residues long: Staphylococcal superantigen-like 1 (226 aa).

Residues 1 to 30 (MKFKAIAKASLALGMLATGVITSNVQSVQA) form the signal peptide.

It belongs to the staphylococcal/streptococcal toxin family. Homodimer.

It localises to the secreted. In terms of biological role, mediates virulence by proteolytically cleaving host proteins, including collagens types I and IV as well as human cytokines IL8, IL17A, and IFN-gamma. The chain is Staphylococcal superantigen-like 1 from Staphylococcus aureus (strain NCTC 8325 / PS 47).